The sequence spans 261 residues: 1-(5-phosphoribosyl)-5-[(5-phosphoribosylamino)methylideneamino] imidazole-4-carboxamide isomerase (261 aa).

Asp-7 functions as the Proton acceptor in the catalytic mechanism. The active-site Proton donor is Asp-129.

It belongs to the HisA/HisF family.

The protein resides in the cytoplasm. The catalysed reaction is 1-(5-phospho-beta-D-ribosyl)-5-[(5-phospho-beta-D-ribosylamino)methylideneamino]imidazole-4-carboxamide = 5-[(5-phospho-1-deoxy-D-ribulos-1-ylimino)methylamino]-1-(5-phospho-beta-D-ribosyl)imidazole-4-carboxamide. The protein operates within amino-acid biosynthesis; L-histidine biosynthesis; L-histidine from 5-phospho-alpha-D-ribose 1-diphosphate: step 4/9. This chain is 1-(5-phosphoribosyl)-5-[(5-phosphoribosylamino)methylideneamino] imidazole-4-carboxamide isomerase, found in Colwellia psychrerythraea (strain 34H / ATCC BAA-681) (Vibrio psychroerythus).